The primary structure comprises 289 residues: ATP synthase subunit a (289 aa).

6 helical membrane-spanning segments follow: residues 43–63 (AFHL…VLIF), 104–124 (IAPL…VDLI), 160–180 (LSVF…GGFI), 193–213 (IFVQ…TLIA), 232–252 (VFIL…GLGV), and 259–279 (AVFH…LTIV).

The protein belongs to the ATPase A chain family. F-type ATPases have 2 components, CF(1) - the catalytic core - and CF(0) - the membrane proton channel. CF(1) has five subunits: alpha(3), beta(3), gamma(1), delta(1), epsilon(1). CF(0) has three main subunits: a(1), b(2) and c(9-12). The alpha and beta chains form an alternating ring which encloses part of the gamma chain. CF(1) is attached to CF(0) by a central stalk formed by the gamma and epsilon chains, while a peripheral stalk is formed by the delta and b chains.

Its subcellular location is the cell inner membrane. In terms of biological role, key component of the proton channel; it plays a direct role in the translocation of protons across the membrane. This is ATP synthase subunit a from Pseudomonas fluorescens (strain SBW25).